The sequence spans 240 residues: Cell division protein FtsQ (240 aa).

At 1 to 7 (MTGPGLR) the chain is on the cytoplasmic side. Residues 8 to 28 (LLAGMGLAGALVLGLSLWLHF) traverse the membrane as a helical segment. The Periplasmic portion of the chain corresponds to 29–240 (DPDQHLPIGS…EADNDGGNAR (212 aa)). In terms of domain architecture, POTRA spans 34 to 102 (LPIGSIQITG…DTLEVHVTEP (69 aa)).

It belongs to the FtsQ/DivIB family. FtsQ subfamily. Part of a complex composed of FtsB, FtsL and FtsQ.

The protein resides in the cell inner membrane. Its function is as follows. Essential cell division protein. May link together the upstream cell division proteins, which are predominantly cytoplasmic, with the downstream cell division proteins, which are predominantly periplasmic. May control correct divisome assembly. This Thioalkalivibrio sp. (strain K90mix) protein is Cell division protein FtsQ.